A 355-amino-acid chain; its full sequence is 3'-5' exonuclease (355 aa).

The disordered stretch occupies residues 1 to 121; that stretch reads MDKYLIKLPN…PSPEKEKPEK (121 aa). Composition is skewed to basic and acidic residues over residues 17–29, 36–50, and 72–92; these read VSDK…KETP, AKKD…KENT, and KNLD…ENPP. Phosphoserine is present on residues serine 105 and serine 113. Residues 147–315 enclose the 3'-5' exonuclease domain; that stretch reads VMQWVEKQKE…GQVIYRDLEQ (169 aa). Positions 164, 166, and 302 each coordinate Mg(2+).

Belongs to the WRNexo family.

The protein resides in the nucleus. Its function is as follows. Has exonuclease activity on both single-stranded and duplex templates bearing overhangs, but not blunt ended duplex DNA, and cleaves in a 3'-5' direction. Essential for the formation of DNA replication focal centers. Has an important role in maintaining genome stability. In Drosophila ananassae (Fruit fly), this protein is 3'-5' exonuclease.